Reading from the N-terminus, the 435-residue chain is GTPase Obg (435 aa).

Positions 6–164 (ADFVDRVKIF…RWLELELKIL (159 aa)) constitute an Obg domain. Positions 165 to 335 (ADVGLVGYPN…LVSKLASIVR (171 aa)) constitute an OBG-type G domain. GTP is bound by residues 171–178 (GYPNVGKS), 196–200 (FTTLI), 217–220 (DIPG), 287–290 (NKID), and 316–318 (SAL). Mg(2+)-binding residues include S178 and T198. The region spanning 357 to 435 (RRLPEKFHLE…IGDFEFEYRE (79 aa)) is the OCT domain.

It belongs to the TRAFAC class OBG-HflX-like GTPase superfamily. OBG GTPase family. In terms of assembly, monomer. It depends on Mg(2+) as a cofactor.

It localises to the cytoplasm. Its function is as follows. An essential GTPase which binds GTP, GDP and possibly (p)ppGpp with moderate affinity, with high nucleotide exchange rates and a fairly low GTP hydrolysis rate. Plays a role in control of the cell cycle, stress response, ribosome biogenesis and in those bacteria that undergo differentiation, in morphogenesis control. This is GTPase Obg from Thermotoga sp. (strain RQ2).